A 94-amino-acid chain; its full sequence is UPF0337 protein NE2439 (94 aa).

The disordered stretch occupies residues 74-94; it reads KNVGEAVSSRQKSVKKRSLYT. Residues 85 to 94 show a composition bias toward basic residues; it reads KSVKKRSLYT.

Belongs to the UPF0337 (CsbD) family.

The sequence is that of UPF0337 protein NE2439 from Nitrosomonas europaea (strain ATCC 19718 / CIP 103999 / KCTC 2705 / NBRC 14298).